We begin with the raw amino-acid sequence, 364 residues long: N-acetyl-gamma-glutamyl-phosphate reductase (364 aa).

The active site involves Cys-157.

This sequence belongs to the NAGSA dehydrogenase family. Type 1 subfamily.

The protein resides in the cytoplasm. It catalyses the reaction N-acetyl-L-glutamate 5-semialdehyde + phosphate + NADP(+) = N-acetyl-L-glutamyl 5-phosphate + NADPH + H(+). It participates in amino-acid biosynthesis; L-arginine biosynthesis; N(2)-acetyl-L-ornithine from L-glutamate: step 3/4. Catalyzes the NADPH-dependent reduction of N-acetyl-5-glutamyl phosphate to yield N-acetyl-L-glutamate 5-semialdehyde. In Bifidobacterium longum (strain NCC 2705), this protein is N-acetyl-gamma-glutamyl-phosphate reductase.